Here is a 988-residue protein sequence, read N- to C-terminus: Transposase for transposon Tn21 (988 aa).

The segment at 672 to 696 (GDGTTSSSDEQNFRTASKAKSTGHI) is disordered. The segment covering 674 to 695 (GTTSSSDEQNFRTASKAKSTGH) has biased composition (polar residues).

It belongs to the transposase 7 family.

In terms of biological role, required for transposition of transposon Tn21. This is Transposase for transposon Tn21 (tnpA) from Escherichia coli.